The sequence spans 498 residues: ATP synthase subunit beta, chloroplastic (498 aa).

172 to 179 (GGAGVGKT) contacts ATP.

This sequence belongs to the ATPase alpha/beta chains family. In terms of assembly, F-type ATPases have 2 components, CF(1) - the catalytic core - and CF(0) - the membrane proton channel. CF(1) has five subunits: alpha(3), beta(3), gamma(1), delta(1), epsilon(1). CF(0) has four main subunits: a(1), b(1), b'(1) and c(9-12).

Its subcellular location is the plastid. The protein localises to the chloroplast thylakoid membrane. The catalysed reaction is ATP + H2O + 4 H(+)(in) = ADP + phosphate + 5 H(+)(out). In terms of biological role, produces ATP from ADP in the presence of a proton gradient across the membrane. The catalytic sites are hosted primarily by the beta subunits. The polypeptide is ATP synthase subunit beta, chloroplastic (Idiospermum australiense (Ribbonwood tree)).